Here is a 450-residue protein sequence, read N- to C-terminus: Ribosomal protein uS12 methylthiotransferase RimO (450 aa).

One can recognise an MTTase N-terminal domain in the interval 10–125; it reads SRIALVSLGC…VVDIVRRAAT (116 aa). The [4Fe-4S] cluster site is built by Cys-19, Cys-54, Cys-88, Cys-162, Cys-166, and Cys-169. In terms of domain architecture, Radical SAM core spans 148 to 378; that stretch reads SGSPFTAYLK…AAVQREVSRA (231 aa). The region spanning 381-447 is the TRAM domain; that stretch reads RARVGSEVTV…PYDLRARVLS (67 aa).

This sequence belongs to the methylthiotransferase family. RimO subfamily. It depends on [4Fe-4S] cluster as a cofactor.

The protein localises to the cytoplasm. The enzyme catalyses L-aspartate(89)-[ribosomal protein uS12]-hydrogen + (sulfur carrier)-SH + AH2 + 2 S-adenosyl-L-methionine = 3-methylsulfanyl-L-aspartate(89)-[ribosomal protein uS12]-hydrogen + (sulfur carrier)-H + 5'-deoxyadenosine + L-methionine + A + S-adenosyl-L-homocysteine + 2 H(+). Catalyzes the methylthiolation of an aspartic acid residue of ribosomal protein uS12. This chain is Ribosomal protein uS12 methylthiotransferase RimO, found in Desulforudis audaxviator (strain MP104C).